The chain runs to 361 residues: MAPTEPWSPSPGSAPWDYSGLDGLEELELCPAGDLPYGYVYIPALYLAAFAVGLLGNAFVVWLLAGRRGPRRLVDTFVLHLAAADLGFVLTLPLWAAAAALGGRWPFGDGLCKLSSFALAGTRCAGALLLAGMSVDRYLAVVKLLEARPLRTPRCALASCCGVWAVALLAGLPSLVYRGLQPLPGGQDSQCGEEPSHAFQGLSLLLLLLTFVLPLVVTLFCYCRISRRLRRPPHVGRARRNSLRIIFAIESTFVGSWLPFSALRAVFHLARLGALPLPCPLLLALRWGLTIATCLAFVNSCANPLIYLLLDRSFRARALDGACGRTGRLARRISSASSLSRDDSSVFRCRAQAANTASASW.

Residues 1-39 (MAPTEPWSPSPGSAPWDYSGLDGLEELELCPAGDLPYGY) are Extracellular-facing. A helical transmembrane segment spans residues 40–60 (VYIPALYLAAFAVGLLGNAFV). The Cytoplasmic portion of the chain corresponds to 61-75 (VWLLAGRRGPRRLVD). A helical transmembrane segment spans residues 76–96 (TFVLHLAAADLGFVLTLPLWA). Residues 97-126 (AAAALGGRWPFGDGLCKLSSFALAGTRCAG) are Extracellular-facing. Residues 127 to 147 (ALLLAGMSVDRYLAVVKLLEA) traverse the membrane as a helical segment. Residues 148 to 155 (RPLRTPRC) lie on the Cytoplasmic side of the membrane. A helical transmembrane segment spans residues 156–176 (ALASCCGVWAVALLAGLPSLV). Over 177 to 200 (YRGLQPLPGGQDSQCGEEPSHAFQ) the chain is Extracellular. A helical transmembrane segment spans residues 201-220 (GLSLLLLLLTFVLPLVVTLF). Over 221–242 (CYCRISRRLRRPPHVGRARRNS) the chain is Cytoplasmic. A helical transmembrane segment spans residues 243–263 (LRIIFAIESTFVGSWLPFSAL). The Extracellular segment spans residues 264-289 (RAVFHLARLGALPLPCPLLLALRWGL). A helical transmembrane segment spans residues 290–310 (TIATCLAFVNSCANPLIYLLL). Residues 311–361 (DRSFRARALDGACGRTGRLARRISSASSLSRDDSSVFRCRAQAANTASASW) lie on the Cytoplasmic side of the membrane.

The protein belongs to the G-protein coupled receptor 1 family.

It is found in the cell membrane. Its function is as follows. Orphan receptor. The chain is Probable G-protein coupled receptor 25 (GPR25) from Homo sapiens (Human).